The following is a 330-amino-acid chain: tRNA (guanine-N(7)-)-methyltransferase (330 aa).

A disordered region spans residues 1 to 27 (MSTPPAKRQKRDQYRKRAAAAANEDTG). Residues 7–18 (KRQKRDQYRKRA) are compositionally biased toward basic residues. S-adenosyl-L-methionine contacts are provided by residues glycine 95 and 118-119 (EI). The disordered stretch occupies residues 138–185 (QNQLKNSSTTASESPAPAIPAEPATDGASPDAASTPETSNSPVPGGYQ). Positions 144 to 162 (SSTTASESPAPAIPAEPAT) are enriched in low complexity. The span at 172 to 185 (TPETSNSPVPGGYQ) shows a compositional bias: polar residues. S-adenosyl-L-methionine contacts are provided by residues 193-194 (NT) and cysteine 213. Aspartate 216 is a catalytic residue. 302 to 304 (TEE) contributes to the S-adenosyl-L-methionine binding site.

Belongs to the class I-like SAM-binding methyltransferase superfamily. TrmB family. As to quaternary structure, forms a complex with trm82.

The protein localises to the nucleus. It carries out the reaction guanosine(46) in tRNA + S-adenosyl-L-methionine = N(7)-methylguanosine(46) in tRNA + S-adenosyl-L-homocysteine. It participates in tRNA modification; N(7)-methylguanine-tRNA biosynthesis. In terms of biological role, catalyzes the formation of N(7)-methylguanine at position 46 (m7G46) in tRNA. The polypeptide is tRNA (guanine-N(7)-)-methyltransferase (trm8) (Aspergillus oryzae (strain ATCC 42149 / RIB 40) (Yellow koji mold)).